A 365-amino-acid chain; its full sequence is G-protein coupled receptor 4 (365 aa).

At 1-10 the chain is on the extracellular side; that stretch reads MDNSTGTWEG. The N-linked (GlcNAc...) asparagine glycan is linked to Asn-3. Residues 11 to 47 traverse the membrane as a helical segment; it reads CHVDSRVDHLFPPSLYIFVIGVGLPTNCLALWAAYRQ. 2 disulfide bridges follow: Cys-11–Cys-260 and Cys-92–Cys-170. The Cytoplasmic segment spans residues 48–51; that stretch reads VRQR. The chain crosses the membrane as a helical span at residues 52-82; it reads NELGVYLMNLSIADLLYICTLPLWVDYFLHH. At 83–87 the chain is on the extracellular side; sequence DNWIH. A helical membrane pass occupies residues 88 to 123; sequence GPGSCKLFGFIFYSNIYISIAFLCCISVDRYLAVAH. Residues 124–131 are Cytoplasmic-facing; the sequence is PLRFARLR. Residues 132–158 traverse the membrane as a helical segment; the sequence is RVKTAVAVSSVVWATELGANSAPLFHD. Residues 159 to 174 lie on the Extracellular side of the membrane; it reads ELFRDRYNHTFCFEKF. Positions 159-174 are extracellular loop 2 (ECL2); it reads ELFRDRYNHTFCFEKF. N-linked (GlcNAc...) asparagine glycosylation occurs at Asn-166. Residues 175-212 form a helical membrane-spanning segment; it reads PMERWVAWMNLYRVFVGFLFPWALMLLCYRGILRAVQS. Topologically, residues 213 to 216 are cytoplasmic; it reads SVST. A helical membrane pass occupies residues 217–252; sequence ERQEKVKIKRLALSLIAIVLVCFAPYHALLLSRSAV. At 253–262 the chain is on the extracellular side; sequence YLGRPWDCGF. The helical transmembrane segment at 263-291 threads the bilayer; sequence EERVFSAYHSSLAFTSLNCVADPILYCLV. Residues 292 to 365 are Cytoplasmic-facing; that stretch reads NEGARSDVAK…PLKVLLPPAQ (74 aa).

This sequence belongs to the G-protein coupled receptor 1 family.

The protein localises to the cell membrane. With respect to regulation, activated by a network of residues that connects an extracellular-facing cavity to Glu-147, a conserved charged residue buried in the transmembrane core of the receptor. Protonation likely drives conformational changes in extracellular loop 2 (ECL2), which stabilizes movement of transmembrane 3 (TM3) and a series of rearrangements that connect the extracellular-facing cavity to Glu-147, a residue only conserved in proton-sensing G-protein coupled receptors. Functionally, proton-sensing G-protein coupled receptor activated by extracellular pH, which is required to monitor pH changes and generate adaptive reactions. Activated by an optimal pH of 6.8-7.2. Ligand binding causes a conformation change that triggers signaling via guanine nucleotide-binding proteins (G proteins) and modulates the activity of downstream effectors, such as adenylate cyclase. GPR4 is mainly coupled to G(s) G proteins and mediates activation of adenylate cyclase activity. May also couple with G(q) and G(12)/G(13) G proteins. Acts as a key regulator of respiratory sensitivity to CO2/H(+) in brain retrotrapezoid nucleus neurons: acts by mediating detection of protons generated by the formation of carbonic acid in the blood, an important mechanism to impulse to breathe. Also acts as a regulator of acid secretion in the kidney collecting duct by maintaining acid-base homeostasis in the kidney. Acidosis-induced GPR4 activation increases paracellular gap formation and permeability of vascular endothelial cells, possibly through the G(12)/G(13)/Rho GTPase signaling pathway. This Rattus norvegicus (Rat) protein is G-protein coupled receptor 4.